The following is a 122-amino-acid chain: Large ribosomal subunit protein uL14 (122 aa).

It belongs to the universal ribosomal protein uL14 family. As to quaternary structure, part of the 50S ribosomal subunit. Forms a cluster with proteins L3 and L19. In the 70S ribosome, L14 and L19 interact and together make contacts with the 16S rRNA in bridges B5 and B8.

In terms of biological role, binds to 23S rRNA. Forms part of two intersubunit bridges in the 70S ribosome. The polypeptide is Large ribosomal subunit protein uL14 (Acinetobacter baylyi (strain ATCC 33305 / BD413 / ADP1)).